The chain runs to 684 residues: Threonine--tRNA ligase (684 aa).

In terms of domain architecture, TGS spans 1–66 (MTVPATDSWP…DTDAEVVPVA (66 aa)). The catalytic stretch occupies residues 261 to 567 (DHRKLGSELD…LTEHYAGAFP (307 aa)). The Zn(2+) site is built by C366, H417, and H544.

It belongs to the class-II aminoacyl-tRNA synthetase family. In terms of assembly, homodimer. Zn(2+) is required as a cofactor.

It is found in the cytoplasm. The enzyme catalyses tRNA(Thr) + L-threonine + ATP = L-threonyl-tRNA(Thr) + AMP + diphosphate + H(+). Functionally, catalyzes the attachment of threonine to tRNA(Thr) in a two-step reaction: L-threonine is first activated by ATP to form Thr-AMP and then transferred to the acceptor end of tRNA(Thr). Also edits incorrectly charged L-seryl-tRNA(Thr). This is Threonine--tRNA ligase from Mycobacterium avium (strain 104).